A 374-amino-acid polypeptide reads, in one-letter code: Alginate lyase (374 aa).

The first 26 residues, 1–26 (MRNPKLKNLLAPTLLSLAMFAGATQA), serve as a signal peptide directing secretion. Substrate is bound by residues 67 to 68 (SK), 140 to 141 (HT), and Tyr-258.

The protein belongs to the polysaccharide lyase 5 family.

The protein localises to the periplasm. The enzyme catalyses Eliminative cleavage of alginate to give oligosaccharides with 4-deoxy-alpha-L-erythro-hex-4-enuronosyl groups at their non-reducing ends and beta-D-mannuronate at their reducing end.. In terms of biological role, catalyzes the depolymerization of alginate by cleaving the beta-1,4 glycosidic bond between two adjacent sugar residues via a beta-elimination mechanism. May serve to degrade mislocalized alginate that is trapped in the periplasmic space. The protein is Alginate lyase of Cobetia marina (Deleya marina).